The chain runs to 353 residues: Anthranilate phosphoribosyltransferase (353 aa).

5-phospho-alpha-D-ribose 1-diphosphate contacts are provided by residues Gly-87, 90 to 91 (GD), Thr-95, 97 to 100 (NIST), 115 to 123 (KHGNRAASS), and Thr-127. Residue Gly-87 coordinates anthranilate. Ser-99 contacts Mg(2+). Asn-118 serves as a coordination point for anthranilate. Anthranilate is bound at residue Arg-173. Mg(2+) is bound by residues Asp-231 and Glu-232.

The protein belongs to the anthranilate phosphoribosyltransferase family. As to quaternary structure, homodimer. It depends on Mg(2+) as a cofactor.

The enzyme catalyses N-(5-phospho-beta-D-ribosyl)anthranilate + diphosphate = 5-phospho-alpha-D-ribose 1-diphosphate + anthranilate. It functions in the pathway amino-acid biosynthesis; L-tryptophan biosynthesis; L-tryptophan from chorismate: step 2/5. Catalyzes the transfer of the phosphoribosyl group of 5-phosphorylribose-1-pyrophosphate (PRPP) to anthranilate to yield N-(5'-phosphoribosyl)-anthranilate (PRA). This is Anthranilate phosphoribosyltransferase from Salinispora arenicola (strain CNS-205).